The chain runs to 652 residues: Nucleolar GTP-binding protein 1 (652 aa).

The region spanning 169–341 (RTIIICGFPN…VKTEACERLL (173 aa)) is the OBG-type G domain. Residues 175–182 (GFPNVGKS), 221–225 (DTPGI), and 289–292 (NKID) contribute to the GTP site. Residues 501–521 (RLSSRKNKPVIPRNKQPKVRD) form a disordered region.

This sequence belongs to the TRAFAC class OBG-HflX-like GTPase superfamily. OBG GTPase family. NOG subfamily.

The protein resides in the nucleus. It is found in the nucleolus. In terms of biological role, involved in the biogenesis of the 60S ribosomal subunit. Required for normal assembly of the mitotic spindle. May be involved in both centrosome-dependent and centrosome-independent spindle assembly programs. Acts as a TP53 repressor, preventing TP53 stabilization and cell cycle arrest. The chain is Nucleolar GTP-binding protein 1 from Drosophila melanogaster (Fruit fly).